The chain runs to 122 residues: Small ribosomal subunit protein uS13 (122 aa).

Residues 92 to 122 (HRRGLPVRGQRTHTNARTRKGPAKPIAGKKK) are disordered.

Belongs to the universal ribosomal protein uS13 family. Part of the 30S ribosomal subunit. Forms a loose heterodimer with protein S19. Forms two bridges to the 50S subunit in the 70S ribosome.

Functionally, located at the top of the head of the 30S subunit, it contacts several helices of the 16S rRNA. In the 70S ribosome it contacts the 23S rRNA (bridge B1a) and protein L5 of the 50S subunit (bridge B1b), connecting the 2 subunits; these bridges are implicated in subunit movement. Contacts the tRNAs in the A and P-sites. The protein is Small ribosomal subunit protein uS13 of Paracoccus denitrificans (strain Pd 1222).